The sequence spans 345 residues: AP2-like ethylene-responsive transcription factor At1g16060 (345 aa).

The disordered stretch occupies residues 15-62 (TRQSKKTSVENETGDDQSATSVVLKAKRKRRSQPRDAPPQRSSVHRGV). DNA-binding regions (AP2/ERF) lie at residues 58–124 (VHRG…LNFP) and 160–218 (KYRG…TNFD). Residues 243 to 302 (HSDLSPFIKPNHESDLSQSQSSSEDNDDRKTKLLKSSPLVAEEVIGPSTPPEIAPPRRSF) form a disordered region.

This sequence belongs to the AP2/ERF transcription factor family. AP2 subfamily.

Its subcellular location is the nucleus. Probably acts as a transcriptional activator. Binds to the GCC-box pathogenesis-related promoter element. May be involved in the regulation of gene expression by stress factors and by components of stress signal transduction pathways. The protein is AP2-like ethylene-responsive transcription factor At1g16060 of Arabidopsis thaliana (Mouse-ear cress).